The following is a 43-amino-acid chain: Protein PsbN (43 aa).

Residues 5–27 (TLVTIFISGSLVSFTGYALYTAF) form a helical membrane-spanning segment.

It belongs to the PsbN family.

The protein resides in the plastid. It is found in the chloroplast thylakoid membrane. Its function is as follows. May play a role in photosystem I and II biogenesis. This chain is Protein PsbN, found in Piper cenocladum (Ant piper).